Reading from the N-terminus, the 60-residue chain is MAVPKRRTSKRRKRARNTHKVAPAIVIQSCPQCSAAKRPHRVCAECGYYAGEQRVAAQEA.

Residues 1 to 19 (MAVPKRRTSKRRKRARNTH) show a composition bias toward basic residues. A disordered region spans residues 1 to 20 (MAVPKRRTSKRRKRARNTHK).

The protein belongs to the bacterial ribosomal protein bL32 family.

This Gemmatimonas aurantiaca (strain DSM 14586 / JCM 11422 / NBRC 100505 / T-27) protein is Large ribosomal subunit protein bL32.